The following is a 497-amino-acid chain: Acetyltransferase FGR3 (497 aa).

2 residues coordinate Ca(2+): aspartate 221 and isoleucine 224. Positions 255 and 303 each coordinate CoA. Aspartate 386 contacts Ca(2+). Residue threonine 396 participates in CoA binding. Aspartate 462 provides a ligand contact to Ca(2+). The tract at residues 477–497 is disordered; sequence DASEAKKANGTNGTNGVNGSS. Positions 485-497 are enriched in low complexity; sequence NGTNGTNGVNGSS.

It belongs to the trichothecene 3-O-acetyltransferase family.

It participates in secondary metabolite biosynthesis. In terms of biological role, acetyltransferase; part of the gene cluster that mediates the biosynthesis of the tetraketides fugralins such as linear fugralin A and cyclic fugralin B, volatile compounds that play a role in the asexual reproductive cycle but are not involved in pathogenicity. One of the key features of fugralins is the presence of a double methyl group, which is only rarely encountered in fungal secondary metabolites. As the fugralins cluster does not contain an independent methyltransferase, the PKS FGR1 is probably responsible for adding two methyl groups to the same carbon atom. Fugralin B is similar to fugralin A except for a cyclization between the carboxylic acid C-8 and the alcohol on C-4 resulting in a six membered lactone ring, probably catalyzed by the cyclase FGR4. The exact role of the individual cluster genes remains unknown and further work is needed to unravel the biosynthetic pathway. The polypeptide is Acetyltransferase FGR3 (Gibberella zeae (strain ATCC MYA-4620 / CBS 123657 / FGSC 9075 / NRRL 31084 / PH-1) (Wheat head blight fungus)).